A 205-amino-acid polypeptide reads, in one-letter code: Holliday junction branch migration complex subunit RuvA (205 aa).

The domain I stretch occupies residues 1 to 62 (MFEYVTGYVE…EDIMALYGFK (62 aa)). The segment at 63 to 141 (TREERLLFTK…DVVPDAFVDL (79 aa)) is domain II. The tract at residues 142 to 152 (FSDEERFDEKK) is flexible linker. The segment at 153 to 205 (GSSAELDEALEALRALGYAEREVSRVVPELLKESLTTDQYIKKALSLLLNGKR) is domain III.

The protein belongs to the RuvA family. As to quaternary structure, homotetramer. Forms an RuvA(8)-RuvB(12)-Holliday junction (HJ) complex. HJ DNA is sandwiched between 2 RuvA tetramers; dsDNA enters through RuvA and exits via RuvB. An RuvB hexamer assembles on each DNA strand where it exits the tetramer. Each RuvB hexamer is contacted by two RuvA subunits (via domain III) on 2 adjacent RuvB subunits; this complex drives branch migration. In the full resolvosome a probable DNA-RuvA(4)-RuvB(12)-RuvC(2) complex forms which resolves the HJ.

The protein resides in the cytoplasm. The RuvA-RuvB-RuvC complex processes Holliday junction (HJ) DNA during genetic recombination and DNA repair, while the RuvA-RuvB complex plays an important role in the rescue of blocked DNA replication forks via replication fork reversal (RFR). RuvA specifically binds to HJ cruciform DNA, conferring on it an open structure. The RuvB hexamer acts as an ATP-dependent pump, pulling dsDNA into and through the RuvAB complex. HJ branch migration allows RuvC to scan DNA until it finds its consensus sequence, where it cleaves and resolves the cruciform DNA. The chain is Holliday junction branch migration complex subunit RuvA from Bacillus cereus (strain AH187).